Consider the following 464-residue polypeptide: Light-independent protochlorophyllide reductase subunit N (464 aa).

Residues Cys-29, Cys-54, and Cys-114 each contribute to the [4Fe-4S] cluster site.

This sequence belongs to the BchN/ChlN family. Protochlorophyllide reductase is composed of three subunits; ChlL, ChlN and ChlB. Forms a heterotetramer of two ChlB and two ChlN subunits. The cofactor is [4Fe-4S] cluster.

The protein resides in the plastid. It localises to the chloroplast. The catalysed reaction is chlorophyllide a + oxidized 2[4Fe-4S]-[ferredoxin] + 2 ADP + 2 phosphate = protochlorophyllide a + reduced 2[4Fe-4S]-[ferredoxin] + 2 ATP + 2 H2O. The protein operates within porphyrin-containing compound metabolism; chlorophyll biosynthesis (light-independent). Its function is as follows. Component of the dark-operative protochlorophyllide reductase (DPOR) that uses Mg-ATP and reduced ferredoxin to reduce ring D of protochlorophyllide (Pchlide) to form chlorophyllide a (Chlide). This reaction is light-independent. The NB-protein (ChlN-ChlB) is the catalytic component of the complex. The polypeptide is Light-independent protochlorophyllide reductase subunit N (Stigeoclonium helveticum (Green alga)).